Reading from the N-terminus, the 513-residue chain is ATP synthase subunit alpha (513 aa).

Position 169 to 176 (169 to 176 (GDRQTGKT)) interacts with ATP.

It belongs to the ATPase alpha/beta chains family. In terms of assembly, F-type ATPases have 2 components, CF(1) - the catalytic core - and CF(0) - the membrane proton channel. CF(1) has five subunits: alpha(3), beta(3), gamma(1), delta(1), epsilon(1). CF(0) has three main subunits: a(1), b(2) and c(9-12). The alpha and beta chains form an alternating ring which encloses part of the gamma chain. CF(1) is attached to CF(0) by a central stalk formed by the gamma and epsilon chains, while a peripheral stalk is formed by the delta and b chains.

The protein localises to the cell inner membrane. It catalyses the reaction ATP + H2O + 4 H(+)(in) = ADP + phosphate + 5 H(+)(out). Functionally, produces ATP from ADP in the presence of a proton gradient across the membrane. The alpha chain is a regulatory subunit. The sequence is that of ATP synthase subunit alpha from Vesicomyosocius okutanii subsp. Calyptogena okutanii (strain HA).